Here is a 138-residue protein sequence, read N- to C-terminus: Large ribosomal subunit protein uL16 (138 aa).

Residues 1-17 (MLIPRKVKHRKQHHPRQ) are compositionally biased toward basic residues. The interval 1 to 22 (MLIPRKVKHRKQHHPRQRGIAS) is disordered.

It belongs to the universal ribosomal protein uL16 family. As to quaternary structure, part of the 50S ribosomal subunit.

Its function is as follows. Binds 23S rRNA and is also seen to make contacts with the A and possibly P site tRNAs. This chain is Large ribosomal subunit protein uL16, found in Mycobacterium tuberculosis (strain ATCC 25177 / H37Ra).